The primary structure comprises 196 residues: Pyridoxal 5'-phosphate synthase subunit PdxT (196 aa).

Position 47–49 (47–49 (GES)) interacts with L-glutamine. Cys-79 functions as the Nucleophile in the catalytic mechanism. L-glutamine contacts are provided by residues Arg-106 and 134–135 (IR). Active-site charge relay system residues include His-170 and Glu-172.

Belongs to the glutaminase PdxT/SNO family. In the presence of PdxS, forms a dodecamer of heterodimers. Only shows activity in the heterodimer.

It carries out the reaction aldehydo-D-ribose 5-phosphate + D-glyceraldehyde 3-phosphate + L-glutamine = pyridoxal 5'-phosphate + L-glutamate + phosphate + 3 H2O + H(+). The catalysed reaction is L-glutamine + H2O = L-glutamate + NH4(+). It functions in the pathway cofactor biosynthesis; pyridoxal 5'-phosphate biosynthesis. Its function is as follows. Catalyzes the hydrolysis of glutamine to glutamate and ammonia as part of the biosynthesis of pyridoxal 5'-phosphate. The resulting ammonia molecule is channeled to the active site of PdxS. The protein is Pyridoxal 5'-phosphate synthase subunit PdxT of Bacillus velezensis (strain DSM 23117 / BGSC 10A6 / LMG 26770 / FZB42) (Bacillus amyloliquefaciens subsp. plantarum).